Consider the following 468-residue polypeptide: Argininosuccinate lyase (468 aa).

The protein belongs to the lyase 1 family. Argininosuccinate lyase subfamily.

It localises to the cytoplasm. It carries out the reaction 2-(N(omega)-L-arginino)succinate = fumarate + L-arginine. It participates in amino-acid biosynthesis; L-arginine biosynthesis; L-arginine from L-ornithine and carbamoyl phosphate: step 3/3. The chain is Argininosuccinate lyase from Gloeobacter violaceus (strain ATCC 29082 / PCC 7421).